The following is a 257-amino-acid chain: Uridylate kinase (257 aa).

An ATP-binding site is contributed by 8-11 (KLSG). Residues 21-26 (GSAGFG) form an involved in allosteric activation by GTP region. Gly56 serves as a coordination point for UMP. Positions 57 and 61 each coordinate ATP. Residues Asp75 and 136-143 (NGAPFFTT) each bind UMP. Asn164, Tyr170, and Asp173 together coordinate ATP.

This sequence belongs to the UMP kinase family. In terms of assembly, homohexamer.

Its subcellular location is the cytoplasm. The enzyme catalyses UMP + ATP = UDP + ADP. It functions in the pathway pyrimidine metabolism; CTP biosynthesis via de novo pathway; UDP from UMP (UMPK route): step 1/1. With respect to regulation, allosterically activated by GTP. Inhibited by UTP. Catalyzes the reversible phosphorylation of UMP to UDP. This chain is Uridylate kinase, found in Deinococcus geothermalis (strain DSM 11300 / CIP 105573 / AG-3a).